Reading from the N-terminus, the 323-residue chain is tRNA U34 carboxymethyltransferase (323 aa).

Residues Lys-91, Trp-105, Lys-110, Gly-130, 152–154 (DPT), 181–182 (IE), Met-196, Tyr-200, and Arg-315 contribute to the carboxy-S-adenosyl-L-methionine site.

This sequence belongs to the class I-like SAM-binding methyltransferase superfamily. CmoB family. As to quaternary structure, homotetramer.

The enzyme catalyses carboxy-S-adenosyl-L-methionine + 5-hydroxyuridine(34) in tRNA = 5-carboxymethoxyuridine(34) in tRNA + S-adenosyl-L-homocysteine + H(+). Functionally, catalyzes carboxymethyl transfer from carboxy-S-adenosyl-L-methionine (Cx-SAM) to 5-hydroxyuridine (ho5U) to form 5-carboxymethoxyuridine (cmo5U) at position 34 in tRNAs. The polypeptide is tRNA U34 carboxymethyltransferase (Salmonella agona (strain SL483)).